Consider the following 142-residue polypeptide: Large ribosomal subunit protein uL13 (142 aa).

The protein belongs to the universal ribosomal protein uL13 family. In terms of assembly, part of the 50S ribosomal subunit.

Its function is as follows. This protein is one of the early assembly proteins of the 50S ribosomal subunit, although it is not seen to bind rRNA by itself. It is important during the early stages of 50S assembly. The protein is Large ribosomal subunit protein uL13 of Stenotrophomonas maltophilia (strain R551-3).